A 530-amino-acid polypeptide reads, in one-letter code: Glutamate--tRNA ligase (530 aa).

The 'HIGH' region motif lies at 26–36; sequence PSPTGKAHIGT. A 'KMSKS' region motif is present at residues 267–271; the sequence is KLSKR. Residue K270 participates in ATP binding.

This sequence belongs to the class-I aminoacyl-tRNA synthetase family. Glutamate--tRNA ligase type 1 subfamily. Monomer.

The protein resides in the cytoplasm. It catalyses the reaction tRNA(Glu) + L-glutamate + ATP = L-glutamyl-tRNA(Glu) + AMP + diphosphate. Catalyzes the attachment of glutamate to tRNA(Glu) in a two-step reaction: glutamate is first activated by ATP to form Glu-AMP and then transferred to the acceptor end of tRNA(Glu). The sequence is that of Glutamate--tRNA ligase from Gloeobacter violaceus (strain ATCC 29082 / PCC 7421).